We begin with the raw amino-acid sequence, 538 residues long: Importin subunit alpha-6 (538 aa).

The IBB domain occupies 1 to 58; sequence MSYKPSAKTEVRRNRYKVSVDADEGRRRREDNMVEIRKNKREENLQKKRREGFNPSMA. Positions 1–69 are disordered; sequence MSYKPSAKTE…QPGQDFSSSL (69 aa). Residues 7 to 46 show a composition bias toward basic and acidic residues; it reads AKTEVRRNRYKVSVDADEGRRRREDNMVEIRKNKREENLQ. A compositionally biased stretch (polar residues) spans 56 to 69; it reads SMASQPGQDFSSSL. ARM repeat units lie at residues 109–149, 152–191, 194–234, 236–275, 278–317, 320–360, 363–402, and 406–445; these read NPPI…NIAS, SENT…NVAG, PKCR…NFCR, KPQP…YLSD, NEKI…NIVT, DIQT…NITA, TSQI…NATS, and HDQI…NILK.

Belongs to the importin alpha family. As to quaternary structure, forms a complex with importin subunit beta-1.

The protein resides in the nucleus envelope. Its function is as follows. Binds to conventional NLS motifs and mediates nuclear protein import across the nuclear envelope. Acts as a cellular receptor for the nuclear import of the virD2 protein of Agrobacterium, but is not essential for Agrobacterium-mediated root transformation. The sequence is that of Importin subunit alpha-6 from Arabidopsis thaliana (Mouse-ear cress).